The following is a 998-amino-acid chain: Sensor histidine kinase AruS (998 aa).

Disordered regions lie at residues 27–82, 154–198, and 224–245; these read ERRP…HARA, RQAG…LPAG, and RQHP…RQPR. Residues 40 to 49 show a composition bias toward low complexity; it reads GEAAVRRAGL. The span at 161 to 183 shows a compositional bias: basic residues; sequence HRLHRPRTTHRHAVRRAPGRRRE. 2 helical membrane-spanning segments follow: residues 264 to 284 and 395 to 415; these read VLLF…FFEY and ASLL…SWLF. The 57-residue stretch at 417–473 folds into the HAMP domain; sequence SLVTRHLWRMSEFAGHIAEGDLQQPLRLDKVDRERDEIDAVAAALEDMRQALRTDRR. The Histidine kinase domain occupies 513-734; the sequence is TMSHEIRTPL…TFWFEIELAL (222 aa). Position 516 is a phosphohistidine; by autocatalysis (histidine 516). The Response regulatory domain occupies 751–869; that stretch reads EVLLVEDVAL…ELRRALGEVG (119 aa). Aspartate 800 carries the 4-aspartylphosphate modification. An HPt domain is found at 894–987; sequence GRHKLAGLLG…RDGAEALRRA (94 aa). Residue histidine 933 is modified to Phosphohistidine.

In terms of processing, autophosphorylated. Activation may require a sequential transfer of a phosphate group from a His in the primary transmitter domain, to an Asp in the receiver domain and to a His in the secondary transmitter domain.

It localises to the cell membrane. It catalyses the reaction ATP + protein L-histidine = ADP + protein N-phospho-L-histidine.. Its pathway is amino-acid degradation; L-arginine degradation [regulation]. In terms of biological role, member of the two-component regulatory system AruS/AruR, which is involved in the regulation of the arginine transaminase (ATA) pathway in response to exogeneous L-arginine. Probably functions as a sensor kinase that phosphorylates AruR. The sequence is that of Sensor histidine kinase AruS (aruS) from Pseudomonas aeruginosa (strain ATCC 15692 / DSM 22644 / CIP 104116 / JCM 14847 / LMG 12228 / 1C / PRS 101 / PAO1).